The primary structure comprises 367 residues: Inhibin alpha chain (367 aa).

A signal peptide spans 1–20 (MVPPLPLLLLLLLVPQGGHG). Positions 21-63 (CQGSELDREIVLAKVRALFLDALGPPAVTGEGGDPGVRRLPRR) are excised as a propeptide. Positions 64–233 (HALGGFARRG…PPSGGERTRR (170 aa)) are cleaved as a propeptide — inhibin alpha N-terminal region. N147 and N269 each carry an N-linked (GlcNAc...) asparagine glycan. Cystine bridges form between C263-C329, C292-C364, and C296-C366.

The protein belongs to the TGF-beta family. In terms of assembly, dimeric, linked by one or more disulfide bonds. Activin B is a dimer of alpha and beta-B. Inhibin A is a dimer of alpha and beta-A. Inhibin B is a dimer of alpha and beta-B. Interacts with TGFBR3L; this interaction regulates female fertility. Post-translationally, proteolytic processing yields a number of bioactive forms, consisting either solely of the mature alpha chain, of the most N-terminal propeptide linked through a disulfide bond to the mature alpha chain, or of the entire proprotein.

Its subcellular location is the secreted. Functionally, inhibins and activins inhibit and activate, respectively, the secretion of follitropin by the pituitary gland. Inhibins/activins are involved in regulating a number of diverse functions such as hypothalamic and pituitary hormone secretion, gonadal hormone secretion, germ cell development and maturation, erythroid differentiation, insulin secretion, nerve cell survival, embryonic axial development or bone growth, depending on their subunit composition. Inhibins appear to oppose the functions of activins. Its function is as follows. Inhibin A is a dimer of alpha/INHA and beta-A/INHBA that functions as a feedback regulator in the hypothalamic-pituitary-gonadal (HPG) axis. Inhibits the secretion of FSH from the anterior pituitary gland by acting on pituitary gonadotrope cells. Antagonizes activin A by binding to the proteoglycan, betaglycan, and forming a stable complex with and, thereby, sequestering type II activin receptors while excluding type I receptor. Inhibin B is a dimer of alpha and beta-B that plays a crucial role in the regulation of the reproductive system by inhibiting the secretion of follicle-stimulating hormone (FSH) from the anterior pituitary gland. Thereby, maintains reproductive homeostasis in both males and females. Acts as a more potent suppressor of FSH release than inhibin A. Functions as competitive receptor antagonist binding activin type II receptors with high affinity in the presence of the TGF-beta type III coreceptor/TGFBR3L. The sequence is that of Inhibin alpha chain (INHA) from Equus caballus (Horse).